A 2196-amino-acid polypeptide reads, in one-letter code: Non-reducing polyketide synthase CTB1 (2196 aa).

An N-terminal acylcarrier protein transacylase domain (SAT) region spans residues Ala-11 to His-250. Positions Lys-381–Asp-814 constitute a Ketosynthase family 3 (KS3) domain. Active-site for beta-ketoacyl synthase activity residues include Cys-553, His-688, and His-733. Residues Ala-922 to Lys-1223 are malonyl-CoA:ACP transacylase (MAT) domain. The product template (PT) domain stretch occupies residues Ser-1298–Val-1611. The segment at His-1302 to Leu-1441 is N-terminal hotdog fold. The PKS/mFAS DH domain maps to His-1302–His-1608. Catalysis depends on His-1335, which acts as the Proton acceptor; for dehydratase activity. Residues Thr-1460–His-1608 form a C-terminal hotdog fold region. The Proton donor; for dehydratase activity role is filled by Asp-1520. The interval Lys-1617 to Lys-1666 is disordered. A compositionally biased stretch (basic and acidic residues) spans Thr-1623–Ala-1636. Carrier domains lie at Pro-1671–Ser-1748 and Asp-1775–Thr-1857. 2 positions are modified to O-(pantetheine 4'-phosphoryl)serine: Ser-1708 and Ser-1816. Over residues Ser-1856–Pro-1867 the composition is skewed to polar residues. The disordered stretch occupies residues Ser-1856–Trp-1923. Positions Ala-1872–Ser-1887 are enriched in low complexity. A thioesterase (TE) domain region spans residues Ile-1937–Met-2187.

Requires pantetheine 4'-phosphate as cofactor.

It catalyses the reaction 6 malonyl-CoA + acetyl-CoA + 6 H(+) = nor-toralactone + 6 CO2 + 7 CoA + 2 H2O. Its pathway is mycotoxin biosynthesis. Its function is as follows. Polyketide synthase; part of the gene cluster that mediates the biosynthesis of cercosporin, a light-activated, non-host-selective toxin. The perylenequinone chromophore of cercosporin absorbs light energy to attain an electronically-activated triplet state and produces active oxygen species such as the hydroxyl radical, superoxide, hydrogen peroxide or singlet oxygen upon reaction with oxygen molecules. These reactive oxygen species cause damage to various cellular components including lipids, proteins and nucleic acids. The first step of cercosporin biosynthesis is performed by the polyketide synthase CTB1 which catalyzes the formation of nor-toralactone. The starter unit acyltransferase (SAT) domain of CTB1 initiates polyketide extension by the selective utilization of acetyl-CoA, which is elongated to the heptaketide in the beta-ketoacyl synthase (KS) domain by successive condensations with six malonyl units introduced by the malonyl acyltransferase (MAT) domain. The product template (PT) domain catalyzes C4-C9 and C2-C11 aldol cyclizations and dehydrations to a trihydroxynaphthalene, which is thought to be delivered to the thioesterase (TE) domain for product release. The bifunctional enzyme CTB3 then methylates nor-toralactone to toralactone before conducting an unusual oxidative aromatic ring opening. The O-methyltransferase CTB2 further methylates the nascent OH-6 of the CBT3 product, blocking further oxidation at this site before the reductase CTB6 reduces the 2-oxopropyl ketone at position C7, giving naphthalene. The FAD-dependent monooxygenase CTB5 in concert with the multicopper oxidase CTB12 are responsible for homodimerization of naphthalene with CTB7 installing the dioxepine moiety, finally producing cercosporin. The fasciclin domain-containing protein CTB11 might act with CTB5 and CTB12 whereas the roles of CTB9 and CTB10 have still to be elucidated. This chain is Non-reducing polyketide synthase CTB1, found in Cercospora nicotianae (Barn spot disease fungus).